The chain runs to 98 residues: NADH-ubiquinone oxidoreductase chain 4L (98 aa).

3 helical membrane-spanning segments follow: residues 1-21 (MSMV…GLLM), 29-49 (SLLC…VTIL), and 61-81 (IILL…LVMV).

This sequence belongs to the complex I subunit 4L family. Core subunit of respiratory chain NADH dehydrogenase (Complex I) which is composed of 45 different subunits.

Its subcellular location is the mitochondrion inner membrane. It catalyses the reaction a ubiquinone + NADH + 5 H(+)(in) = a ubiquinol + NAD(+) + 4 H(+)(out). Core subunit of the mitochondrial membrane respiratory chain NADH dehydrogenase (Complex I) which catalyzes electron transfer from NADH through the respiratory chain, using ubiquinone as an electron acceptor. Part of the enzyme membrane arm which is embedded in the lipid bilayer and involved in proton translocation. This chain is NADH-ubiquinone oxidoreductase chain 4L (MT-ND4L), found in Pusa hispida (Ringed seal).